The sequence spans 253 residues: 5'-nucleotidase SurE 2 (253 aa).

A divalent metal cation-binding residues include Asp8, Asp9, Ser39, and Asn92.

This sequence belongs to the SurE nucleotidase family. A divalent metal cation is required as a cofactor.

The protein localises to the cytoplasm. The catalysed reaction is a ribonucleoside 5'-phosphate + H2O = a ribonucleoside + phosphate. Its function is as follows. Nucleotidase that shows phosphatase activity on nucleoside 5'-monophosphates. The sequence is that of 5'-nucleotidase SurE 2 from Burkholderia lata (strain ATCC 17760 / DSM 23089 / LMG 22485 / NCIMB 9086 / R18194 / 383).